Here is a 1342-residue protein sequence, read N- to C-terminus: MVYSYTEKKRIRKDFGKRPQVLDIPYLLSIQLDSFQKFIEQDPEGQHGLEAAFRSVFPIQSYSGNSELQYVSYRLGEPVFDVKECQIRGVTYSAPLRVKLRLVIYEREAPEGTVKDIKEQEVYMGEIPLMTENGTFVINGTERVIVSQLHRSPGVFFDSDKGKTHSSGKVLYNARIIPYRGSWLDFEFDPKDNLFVRIDRRRKLPATIILRALNFTTAQILDLFFEKVVFEIRDNKLQMELVPERLRGETASFDIEANGKVYVEKARRITARHIRQLEKDGIDRIEVPVEYIAGKVVAKDYVDASTGELICAANMELSLDLLAKLSQAGHKQIETLFTNDLDHGAYISETLRVDPTSDRLSALVEIYRMMRPGEPPTREAAENLFENLFFSEDRYDLSAVGRMKFNRSLLRDEIEGSGILSKEDITEVMKKLIDIRNGRGEVDDIDHLGNRRIRSVGEMAENQFRVGLVRVERAVKERLSLGDLDTLMPQDMINAKPISAAVKEFFGSSQLSQFMDQNNPLSEITHKRRISALGPGGLTRERAGFEVRDVHPTHYGRVCPIETPEGPNIGLINSLSVYAQTNEYGFLETPYRRVRDGVVTDEINYLSAIEEGNFVIAQANSNLDDEGRFLEDLVTCRSKGESSLFSREQVDYMDVSTQQIVSVGASLIPFLEHDDANRALMGANMQRQAVPTLRADKPLVGTGMERAVAVDSGVTSVAKRGGTVQYVDASRIVIKVNEDEMHPGEAGIDIYNLTKYTRSNQNTCINQMPCVNLGEPIERGDVLADGPSTDLGELALGQNMRVAFMPWNGYNFEDSILVSERVVQEDRFTTIHIQELACVSRDTKLGPEEITADIPNVGEAALSKLDESGIVYIGAEVTGGDILVGKVTPKGETQLTPEEKLLRAIFGEKASDVKDSSLRVPNGVSGTVIDVQVFTRDGVEKDKRALEIEEMQLKQAKKDLTEELQILEAGLFARIHAVLVSGGIEAEKLSKLPRERWLELGLTDEDKQNQLEQLAEQYDEMKSEFEKKMDAKRRKITQGDDLAPGVLKIVKVYLAVKRQIQPGDKMAGRHGNKGVISKINPIEDMPYDENGTPVDIVLNPLGVPSRMNIGQILETHLGMAAKGIGEKINAMLKKQEEVAKLREFIQKAYDLGDNVCQKVDLSTFTDDEVLRLAENLKKGMPIATPVFDGATEKEIKELLQLGGLPTSGQITLFDGRTGEQFERQVTVGYMYMLKLNHLVDDKMHARSTGSYSLVTQQPLGGKAQFGGQRFGEMEVWALEAYGAAYTLQEMLTVKSDDVNGRTKMYKNIVDGDHRMEPGMPESFNVLLKEIRSLGINIELEEE.

It belongs to the RNA polymerase beta chain family. As to quaternary structure, the RNAP catalytic core consists of 2 alpha, 1 beta, 1 beta' and 1 omega subunit. When a sigma factor is associated with the core the holoenzyme is formed, which can initiate transcription.

It catalyses the reaction RNA(n) + a ribonucleoside 5'-triphosphate = RNA(n+1) + diphosphate. Functionally, DNA-dependent RNA polymerase catalyzes the transcription of DNA into RNA using the four ribonucleoside triphosphates as substrates. This Yersinia pseudotuberculosis serotype O:1b (strain IP 31758) protein is DNA-directed RNA polymerase subunit beta.